The following is a 310-amino-acid chain: D-alanine--D-alanine ligase (310 aa).

Residues 107–302 (KQAFQAARLT…FEDLVERILA (196 aa)) enclose the ATP-grasp domain. 135–188 (EFSLPVVVKPSQEGSSVGVSIVKKESEFAAAMKEAFRYDREILVEQFIKGSEVQ) is a binding site for ATP. Residues aspartate 256, glutamate 269, and asparagine 271 each coordinate Mg(2+).

It belongs to the D-alanine--D-alanine ligase family. It depends on Mg(2+) as a cofactor. Mn(2+) is required as a cofactor.

The protein localises to the cytoplasm. The catalysed reaction is 2 D-alanine + ATP = D-alanyl-D-alanine + ADP + phosphate + H(+). It participates in cell wall biogenesis; peptidoglycan biosynthesis. In terms of biological role, cell wall formation. The polypeptide is D-alanine--D-alanine ligase (Geotalea uraniireducens (strain Rf4) (Geobacter uraniireducens)).